The sequence spans 217 residues: UPF0111 protein MTH_1689 (217 aa).

This sequence belongs to the UPF0111 family.

The protein is UPF0111 protein MTH_1689 of Methanothermobacter thermautotrophicus (strain ATCC 29096 / DSM 1053 / JCM 10044 / NBRC 100330 / Delta H) (Methanobacterium thermoautotrophicum).